The chain runs to 184 residues: Ribosome-recycling factor (184 aa).

It belongs to the RRF family.

Its subcellular location is the cytoplasm. Functionally, responsible for the release of ribosomes from messenger RNA at the termination of protein biosynthesis. May increase the efficiency of translation by recycling ribosomes from one round of translation to another. This chain is Ribosome-recycling factor, found in Oleidesulfovibrio alaskensis (strain ATCC BAA-1058 / DSM 17464 / G20) (Desulfovibrio alaskensis).